A 413-amino-acid chain; its full sequence is 2,3-diketo-5-methylthiopentyl-1-phosphate enolase (413 aa).

K98 acts as the Proton acceptor in catalysis. Residues K147, 173 to 176 (KDDE), H264, G337, and 359 to 360 (GG) each bind substrate. Positions 173, 175, and 176 each coordinate Mg(2+). An N6-carboxylysine modification is found at K173.

It belongs to the RuBisCO large chain family. Type IV subfamily. In terms of assembly, homodimer. Mg(2+) serves as cofactor.

The catalysed reaction is 5-methylsulfanyl-2,3-dioxopentyl phosphate = 2-hydroxy-5-methylsulfanyl-3-oxopent-1-enyl phosphate. It functions in the pathway amino-acid biosynthesis; L-methionine biosynthesis via salvage pathway; L-methionine from S-methyl-5-thio-alpha-D-ribose 1-phosphate: step 3/6. Functionally, catalyzes the enolization of 2,3-diketo-5-methylthiopentyl-1-phosphate (DK-MTP-1-P) into 2-hydroxy-3-keto-5-methylthiopentenyl-1-phosphate (HK-MTPenyl-1-P). The polypeptide is 2,3-diketo-5-methylthiopentyl-1-phosphate enolase (Geobacillus thermodenitrificans (strain NG80-2)).